Consider the following 197-residue polypeptide: Segregation and condensation protein B (197 aa).

This sequence belongs to the ScpB family. As to quaternary structure, homodimer. Homodimerization may be required to stabilize the binding of ScpA to the Smc head domains. Component of a cohesin-like complex composed of ScpA, ScpB and the Smc homodimer, in which ScpA and ScpB bind to the head domain of Smc. The presence of the three proteins is required for the association of the complex with DNA.

It localises to the cytoplasm. Its function is as follows. Participates in chromosomal partition during cell division. May act via the formation of a condensin-like complex containing Smc and ScpA that pull DNA away from mid-cell into both cell halves. This chain is Segregation and condensation protein B, found in Halalkalibacterium halodurans (strain ATCC BAA-125 / DSM 18197 / FERM 7344 / JCM 9153 / C-125) (Bacillus halodurans).